The sequence spans 281 residues: NAD kinase (281 aa).

The active-site Proton acceptor is the aspartate 61. Residues 61-62, 134-135, arginine 145, aspartate 164, 175-180, and glutamine 234 contribute to the NAD(+) site; these read DG, ND, and TAYSLS.

This sequence belongs to the NAD kinase family. It depends on a divalent metal cation as a cofactor.

It is found in the cytoplasm. The catalysed reaction is NAD(+) + ATP = ADP + NADP(+) + H(+). Its function is as follows. Involved in the regulation of the intracellular balance of NAD and NADP, and is a key enzyme in the biosynthesis of NADP. Catalyzes specifically the phosphorylation on 2'-hydroxyl of the adenosine moiety of NAD to yield NADP. The polypeptide is NAD kinase (Clostridium botulinum (strain ATCC 19397 / Type A)).